A 600-amino-acid polypeptide reads, in one-letter code: Chaperonin 60 subunit beta 1, chloroplastic (600 aa).

Polar residues predominate over residues 1-12 (MASTFTATSSIG). The disordered stretch occupies residues 1-23 (MASTFTATSSIGSMVAPNGHKSD). Residues 1-54 (MASTFTATSSIGSMVAPNGHKSDKKLISKLSSSSFGRRQSVCPRPRRSSSAIVC) constitute a chloroplast transit peptide. Phosphoserine occurs at positions 101 and 478.

This sequence belongs to the chaperonin (HSP60) family. As to quaternary structure, part of the Cpn60 complex composed of 7 alpha and 7 beta subunits. Can also form a complex composed of 14 beta subunits only. Both complexes show ATPase activity. The Cpn60 complex interacts with the Cpn10 complex. Interacts with RAB during heat stress. In terms of tissue distribution, expressed in leaves, stems, petioles and flowers.

The protein localises to the plastid. It is found in the chloroplast stroma. In terms of biological role, binds RuBisCO small and large subunits and is implicated in the assembly of the enzyme oligomer. Involved in protein assisted folding. Required for proper plastid division. This Arabidopsis thaliana (Mouse-ear cress) protein is Chaperonin 60 subunit beta 1, chloroplastic (CPN60B1).